The primary structure comprises 55 residues: Accessory gland-specific peptide 70A (55 aa).

A signal peptide spans 1 to 19 (MKTLSLFLVLVCLLGLVQS). Pro28, Pro32, Pro34, and Pro38 each carry hydroxyproline. The cysteines at positions 43 and 55 are disulfide-linked.

As to expression, main cells of the accessory glands of males (paragonial gland).

It is found in the secreted. Its function is as follows. Represses female sexual receptivity and stimulates oviposition. In Drosophila mauritiana (Fruit fly), this protein is Accessory gland-specific peptide 70A (Acp70A).